Here is a 140-residue protein sequence, read N- to C-terminus: Small ribosomal subunit protein uS19 (140 aa).

The protein belongs to the universal ribosomal protein uS19 family.

In terms of biological role, protein S19 forms a complex with S13 that binds strongly to the 16S ribosomal RNA. The protein is Small ribosomal subunit protein uS19 of Metallosphaera sedula (strain ATCC 51363 / DSM 5348 / JCM 9185 / NBRC 15509 / TH2).